Reading from the N-terminus, the 801-residue chain is Putative mRNA-capping enzyme P5 (801 aa).

This sequence belongs to the phytoreovirus protein P5 family.

Its subcellular location is the virion. It is found in the host cytoplasm. It catalyses the reaction a 5'-end diphospho-ribonucleoside in mRNA + GTP + H(+) = a 5'-end (5'-triphosphoguanosine)-ribonucleoside in mRNA + diphosphate. It functions in the pathway mRNA processing; mRNA capping. In terms of biological role, enzyme involved in mRNA capping (Potential). Binds to GTP and might have guanylyltransferase activity. Together with the RNA-directed RNA polymerase P1 and protein P7, forms an transcriptional complex positioned near the channels situated at each of the five-fold vertices of the core. This is Putative mRNA-capping enzyme P5 from Alopecurus aequalis (Barnyard grass).